Consider the following 165-residue polypeptide: PTS system glucose-specific EIIA component (165 aa).

The 105-residue stretch at 34 to 138 (DPVFAQKMMG…SSITPIIISN (105 aa)) folds into the PTS EIIA type-1 domain. Histidine 71 and histidine 86 together coordinate Zn(2+). The active-site Tele-phosphohistidine intermediate; for EIIA activity is the histidine 86. Histidine 86 carries the phosphohistidine; by HPr modification.

As to quaternary structure, heterodimer with glycerol kinase (glpk). Zn(2+) is required as a cofactor.

It is found in the cytoplasm. Its function is as follows. The phosphoenolpyruvate-dependent sugar phosphotransferase system (sugar PTS), a major carbohydrate active transport system, catalyzes the phosphorylation of incoming sugar substrates concomitantly with their translocation across the cell membrane. The enzyme II complex composed of PtsG and Crr is involved in glucose transport. In Oceanobacillus iheyensis (strain DSM 14371 / CIP 107618 / JCM 11309 / KCTC 3954 / HTE831), this protein is PTS system glucose-specific EIIA component (crr).